The primary structure comprises 144 residues: Large ribosomal subunit protein uL16 (144 aa).

Positions 1–16 are enriched in basic residues; that stretch reads MLVPKRVKHRKVQRGH. Residues 1 to 20 form a disordered region; sequence MLVPKRVKHRKVQRGHMRGE.

Belongs to the universal ribosomal protein uL16 family. Part of the 50S ribosomal subunit.

Its function is as follows. Binds 23S rRNA and is also seen to make contacts with the A and possibly P site tRNAs. This Limosilactobacillus reuteri (strain DSM 20016) (Lactobacillus reuteri) protein is Large ribosomal subunit protein uL16.